We begin with the raw amino-acid sequence, 133 residues long: Vascular endothelial growth factor homolog (133 aa).

An N-terminal signal peptide occupies residues 1-20; the sequence is MKLLVGILVAVCLHQYLLNA. 3 cysteine pairs are disulfide-bonded: C36–C78, C67–C112, and C71–C114. An N-linked (GlcNAc...) asparagine; by host glycan is attached at N85.

This sequence belongs to the PDGF/VEGF growth factor family. Homodimer; disulfide-linked.

It is found in the secreted. Induces endothelial proliferation. The protein is Vascular endothelial growth factor homolog of Orf virus (strain NZ2) (OV NZ-2).